The chain runs to 466 residues: Keratin, type II cytoskeletal 7 (466 aa).

Ser2 bears the N-acetylserine mark. Phosphoserine is present on residues Ser2 and Ser7. The segment at 2 to 91 (SLHFGSQVFS…DPSIQQVRQE (90 aa)) is head. An O-linked (GlcNAc) serine glycan is attached at Ser12. Arg20 is modified (dimethylated arginine; alternate). Arg20 carries the omega-N-methylarginine; alternate modification. A phosphoserine mark is found at Ser54, Ser72, and Ser84. Residues 91–127 (EEREQIKTLNNKFASFIDKVRFLEQQNKLLETKWALL) are coil 1A. The IF rod domain occupies 92 to 404 (EREQIKTLNN…KLLEGEESRL (313 aa)). The residue at position 98 (Thr98) is a Phosphothreonine. The tract at residues 128-145 (QEQKSAKSNRLPGIFEAQ) is linker 1. A Glycyl lysine isopeptide (Lys-Gly) (interchain with G-Cter in SUMO2) cross-link involves residue Lys131. Residues 146–237 (IAGLRKQLEA…TLYEQELKEL (92 aa)) are coil 1B. Lys180 is subject to N6-acetyllysine. The segment at 238–261 (QSEVSDTSVVLSMDNNRSLDLDSI) is linker 12. Phosphoserine is present on Ser255. The tract at residues 262-400 (IAEVKAQYEE…ATYRKLLEGE (139 aa)) is coil 2. Glycyl lysine isopeptide (Lys-Gly) (interchain with G-Cter in SUMO2) cross-links involve residues Lys266 and Lys287. At Thr290 the chain carries Phosphothreonine. Residues Lys297 and Lys332 each participate in a glycyl lysine isopeptide (Lys-Gly) (interchain with G-Cter in SUMO2) cross-link. The interval 401–466 (ESRLTGDGVG…TSATSRSPRK (66 aa)) is tail.

Belongs to the intermediate filament family. In terms of assembly, heterotetramer of two type I and two type II keratins. Interacts with eukaryotic translation initiator factor 3 (eIF3) subunit EIF3S10. Interacts with GPER1. Post-translationally, arg-20 is dimethylated, probably to asymmetric dimethylarginine.

Its function is as follows. Blocks interferon-dependent interphase and stimulates DNA synthesis in cells. The protein is Keratin, type II cytoskeletal 7 of Bos taurus (Bovine).